Consider the following 404-residue polypeptide: MLLAEIISVGTELLFGEIVDSNAAFLARELGERGVTLHRKTVLGDNLGRVSEGLALALSRADLVIVGGGLGPTDDDLTREAIAAVMQETPAEDPELLAWLRGLYEARGRVMPEVNRKQAWLIPSAEALPNPVGTAPGWFVRRQTEQGEKIIVALPGPPREMHKMWREQVLPRLPLPGRALVHTTIHTQGIGESNVAEILGELTRQANPSVATYFRKTGVDVRVAASADTEAEARALLAPVLDDVRGKLARWTWGEDGQTLAGAVGQQLAGRTLGVIEAGSAGALSLLLADEPAFHDAAVTQDHRRLITLGLTPVTLKEAGLVSEQAARELAAGAREHLASDVGLSVVVGVTGERAGQAYAALDTGTLQKTVTVNWPGDPEQVRERAAVAALGLAFRALAAGGEG.

Belongs to the CinA family.

In Deinococcus radiodurans (strain ATCC 13939 / DSM 20539 / JCM 16871 / CCUG 27074 / LMG 4051 / NBRC 15346 / NCIMB 9279 / VKM B-1422 / R1), this protein is CinA-like protein.